We begin with the raw amino-acid sequence, 108 residues long: DNA-directed RNA polymerase subunit omega (108 aa).

Belongs to the RNA polymerase subunit omega family. In terms of assembly, the RNAP catalytic core consists of 2 alpha, 1 beta, 1 beta' and 1 omega subunit. When a sigma factor is associated with the core the holoenzyme is formed, which can initiate transcription.

It catalyses the reaction RNA(n) + a ribonucleoside 5'-triphosphate = RNA(n+1) + diphosphate. Its function is as follows. Promotes RNA polymerase assembly. Latches the N- and C-terminal regions of the beta' subunit thereby facilitating its interaction with the beta and alpha subunits. The sequence is that of DNA-directed RNA polymerase subunit omega from Mycolicibacterium paratuberculosis (strain ATCC BAA-968 / K-10) (Mycobacterium paratuberculosis).